The following is a 153-amino-acid chain: Transcriptional repressor NrdR (153 aa).

Residues 3-34 (CPFCNNISTNVKDSRSIEDDMLIRRRRVCPVC) fold into a zinc finger. The ATP-cone domain occupies 49 to 139 (LMVIKKNGGL…VYMNFKNIND (91 aa)).

This sequence belongs to the NrdR family. Zn(2+) serves as cofactor.

Functionally, negatively regulates transcription of bacterial ribonucleotide reductase nrd genes and operons by binding to NrdR-boxes. This is Transcriptional repressor NrdR from Ehrlichia ruminantium (strain Gardel).